Consider the following 359-residue polypeptide: Peroxisome assembly protein 12 (359 aa).

Topologically, residues M1 to S19 are peroxisomal matrix. A helical membrane pass occupies residues I20–S47. Over N48 to H51 the chain is Cytoplasmic. Residues F52–S76 form a helical membrane-spanning segment. At K77 to P109 the chain is on the peroxisomal matrix side. Residues K110–E139 traverse the membrane as a helical segment. Over E140–S144 the chain is Cytoplasmic. Residues I145 to L183 traverse the membrane as a helical segment. Residues G184–T249 lie on the Peroxisomal matrix side of the membrane. Residues G250–T277 form a helical membrane-spanning segment. The Cytoplasmic portion of the chain corresponds to A278 to N359. Residues C304, C307, C325, and C328 each coordinate Zn(2+). The segment at C304–G343 adopts an RING-type; degenerate zinc-finger fold.

Belongs to the pex2/pex10/pex12 family. Component of the PEX2-PEX10-PEX12 retrotranslocation channel, composed of PEX2, PEX10 and PEX12. Interacts with PEX19 via its cytoplasmic domain.

Its subcellular location is the peroxisome membrane. Its pathway is protein modification; protein ubiquitination. Component of a retrotranslocation channel required for peroxisome organization by mediating export of the PEX5 receptor from peroxisomes to the cytosol, thereby promoting PEX5 recycling. The retrotranslocation channel is composed of PEX2, PEX10 and PEX12; each subunit contributing transmembrane segments that coassemble into an open channel that specifically allows the passage of PEX5 through the peroxisomal membrane. PEX12 also regulates PEX5 recycling by activating the E3 ubiquitin-protein ligase activity of PEX10. When PEX5 recycling is compromised, PEX12 stimulates PEX10-mediated polyubiquitination of PEX5, leading to its subsequent degradation. The sequence is that of Peroxisome assembly protein 12 (PEX12) from Bos taurus (Bovine).